Here is a 353-residue protein sequence, read N- to C-terminus: Ribosomal RNA small subunit methyltransferase C (353 aa).

Belongs to the methyltransferase superfamily. RsmC family. As to quaternary structure, monomer.

It localises to the cytoplasm. It catalyses the reaction guanosine(1207) in 16S rRNA + S-adenosyl-L-methionine = N(2)-methylguanosine(1207) in 16S rRNA + S-adenosyl-L-homocysteine + H(+). Functionally, specifically methylates the guanine in position 1207 of 16S rRNA in the 30S particle. The protein is Ribosomal RNA small subunit methyltransferase C of Marinomonas sp. (strain MWYL1).